Here is a 235-residue protein sequence, read N- to C-terminus: Large ribosomal subunit protein uL1 (235 aa).

Belongs to the universal ribosomal protein uL1 family. Part of the 50S ribosomal subunit.

Functionally, binds directly to 23S rRNA. The L1 stalk is quite mobile in the ribosome, and is involved in E site tRNA release. Protein L1 is also a translational repressor protein, it controls the translation of the L11 operon by binding to its mRNA. This is Large ribosomal subunit protein uL1 from Corynebacterium diphtheriae (strain ATCC 700971 / NCTC 13129 / Biotype gravis).